A 1019-amino-acid polypeptide reads, in one-letter code: MWVQGHSSRASATESVSFSGIVQMDEDTHYDKVEDVVGSHIEDAVTFWAQSINRNKDIMKIGCSLSEVCPQASSVLGNLDPNKIYGGLFSEDQCWYRCKVLKIISVEKCLVRYIDYGNTEILNRSDIVEIPLELQFSSVAKKYKLWGLHIPSDQEVTQFDQGTTFLGSLIFEKEIKMRIKATSEDGTVIAQAEYGSVDIGEEVLKKGFAEKCRLASRTDICEEKKLDPGQLVLRNLKSPIPLWGHRSNQSTFSRPKGHLSEKMTLDLKDENDAGNLITFPKESLAVGDFNLGSNVSLEKIKQDQKLIEENEKLKTEKDALLESYKALELKVEQIAQELQQEKAAAVDLTNHLEYTLKTYIDTRMKNLAAKMEILKEMRHVDISVRFGKDLSDAIQVLDEGCFTTPASLNGLEIIWAEYSLAQENIKTCEYVSEGNILIAQRNEMQQKLYMSVEDFILEVDESSLNKRLKTLQDLSVSLEAVYGQAKEGANSDEILKKFYDWKCDKREEFTSVRSETDASLHRLVAWFQRTLKVFDLSVEGSLISEDAMDNIDEILEKTESSVCKELEIALVDQGDADKEIISNTYSQVLQKIHSEERLIATVQAKYKDSIEFKKQLIEYLNKSPSVDHLLSIKKTLKSLKALLRWKLVEKSNLEESDDPDGSQIEKIKEEITQLRNNVFQEIYHEREEYEMLTSLAQKWFPELPLLHPEIGLLKYMNSGGLLTMSLERDLLDAEPMKELSSKRPLVRSEVNGQIILLKGYSVDVDTEAKVIERAATYHRAWREAEGDSGLLPLIFLFLCKSDPMAYLMVPYYPRANLNAVQANMPLNSEETLKVMKGVAQGLHTLHKADIIHGSLHQNNVFALNREQGIVGDFDFTKSVSQRASVNMMVGDLSLMSPELKMGKPASPGSDLYAYGCLLLWLSVQNQEFEINKDGIPKVDQFHLDDKVKSLLCSLICYRSSMTAEQVLNAECFLMPKEQSVPNPEKDTEYTLYKKEEEIKTENLDKCMEKTRNGEANFDC.

The Tudor domain maps to 78-137 (NLDPNKIYGGLFSEDQCWYRCKVLKIISVEKCLVRYIDYGNTEILNRSDIVEIPLELQFS). A coiled-coil region spans residues 298–355 (EKIKQDQKLIEENEKLKTEKDALLESYKALELKVEQIAQELQQEKAAAVDLTNHLEYT). The Protein kinase domain occupies 710–1019 (IGLLKYMNSG…TRNGEANFDC (310 aa)). ATP contacts are provided by residues 716-724 (MNSGGLLTM) and lysine 737.

The protein belongs to the protein kinase superfamily. Ser/Thr protein kinase family. As to expression, testis specific.

It carries out the reaction L-seryl-[protein] + ATP = O-phospho-L-seryl-[protein] + ADP + H(+). It catalyses the reaction L-threonyl-[protein] + ATP = O-phospho-L-threonyl-[protein] + ADP + H(+). This is Serine/threonine-protein kinase 31 (STK31) from Homo sapiens (Human).